We begin with the raw amino-acid sequence, 120 residues long: Small ribosomal subunit protein bS6 (120 aa).

This sequence belongs to the bacterial ribosomal protein bS6 family.

Binds together with bS18 to 16S ribosomal RNA. This is Small ribosomal subunit protein bS6 from Blochmanniella floridana.